We begin with the raw amino-acid sequence, 200 residues long: ATP-dependent Clp protease proteolytic subunit 2 (200 aa).

The active-site Nucleophile is the Ser101. His126 is an active-site residue.

Belongs to the peptidase S14 family. As to quaternary structure, fourteen ClpP subunits assemble into 2 heptameric rings which stack back to back to give a disk-like structure with a central cavity, resembling the structure of eukaryotic proteasomes.

It localises to the cytoplasm. It carries out the reaction Hydrolysis of proteins to small peptides in the presence of ATP and magnesium. alpha-casein is the usual test substrate. In the absence of ATP, only oligopeptides shorter than five residues are hydrolyzed (such as succinyl-Leu-Tyr-|-NHMec, and Leu-Tyr-Leu-|-Tyr-Trp, in which cleavage of the -Tyr-|-Leu- and -Tyr-|-Trp bonds also occurs).. Functionally, cleaves peptides in various proteins in a process that requires ATP hydrolysis. Has a chymotrypsin-like activity. Plays a major role in the degradation of misfolded proteins. This chain is ATP-dependent Clp protease proteolytic subunit 2, found in Prochlorococcus marinus (strain MIT 9313).